We begin with the raw amino-acid sequence, 311 residues long: Pyrimidine-specific ribonucleoside hydrolase RihA (311 aa).

The active site involves His240.

It belongs to the IUNH family. RihA subfamily.

Functionally, hydrolyzes cytidine or uridine to ribose and cytosine or uracil, respectively. The protein is Pyrimidine-specific ribonucleoside hydrolase RihA of Salmonella schwarzengrund (strain CVM19633).